A 241-amino-acid polypeptide reads, in one-letter code: Platelet-derived growth factor subunit B (241 aa).

The signal sequence occupies residues 1–20 (MNRCWALFLPLCCYLRLVSA). Positions 21–81 (EGDPIPEELY…ELESSSRGRR (61 aa)) are cleaved as a propeptide — removed in mature form. N-linked (GlcNAc...) asparagine glycosylation occurs at Asn-63. 3 cysteine pairs are disulfide-bonded: Cys-97/Cys-141, Cys-130/Cys-178, and Cys-134/Cys-180. Positions 191–241 (RSPGTSREQRAKTPQARVTIRTVRIRRPPKGKHRKFKHTHDKAALKETLGA) are cleaved as a propeptide — removed in mature form. Over residues 217–230 (RPPKGKHRKFKHTH) the composition is skewed to basic residues. Residues 217–241 (RPPKGKHRKFKHTHDKAALKETLGA) are disordered.

This sequence belongs to the PDGF/VEGF growth factor family. Antiparallel homodimer; disulfide-linked. Antiparallel heterodimer with PDGFA; disulfide-linked. The PDGFB homodimer interacts with PDGFRA and PDGFRB homodimers, and with heterodimers formed by PDGFRA and PDGFRB. The heterodimer composed of PDGFA and PDGFB interacts with PDGFRB homodimers, and with heterodimers formed by PDGFRA and PDGFRB. Interacts with XLKD1. Interacts with LRP1. Interacts with SORL1 (via the N-terminal ectodomain). Interacts with CD82; this interaction inhibits PDGFB-mediated signaling pathway. Localized to vascular smooth muscle cells. Also weakly expressed by cortical interstitial cells but absent in tubules. Up-regulated in areas of renal fibrosis. In mice with unilateral ureteral obstruction, an increased expression in interstitial cells and in some tubules observed after day 4.

Its subcellular location is the secreted. In terms of biological role, growth factor that plays an essential role in the regulation of embryonic development, cell proliferation, cell migration, survival and chemotaxis. Potent mitogen for cells of mesenchymal origin. Required for normal proliferation and recruitment of pericytes and vascular smooth muscle cells in the central nervous system, skin, lung, heart and placenta. Required for normal blood vessel development, and for normal development of kidney glomeruli. Plays an important role in wound healing. Signaling is modulated by the formation of heterodimers with PDGFA. This is Platelet-derived growth factor subunit B (Pdgfb) from Mus musculus (Mouse).